Here is a 350-residue protein sequence, read N- to C-terminus: Geranylgeranyl pyrophosphate synthase (350 aa).

Isopentenyl diphosphate-binding residues include lysine 66, arginine 69, and histidine 98. 2 residues coordinate Mg(2+): aspartate 105 and aspartate 109. A dimethylallyl diphosphate-binding site is contributed by arginine 114. Arginine 115 is an isopentenyl diphosphate binding site. Residues lysine 200, threonine 201, glutamine 236, asparagine 243, and lysine 263 each coordinate dimethylallyl diphosphate.

It belongs to the FPP/GGPP synthase family. It depends on Mg(2+) as a cofactor.

The enzyme catalyses isopentenyl diphosphate + dimethylallyl diphosphate = (2E)-geranyl diphosphate + diphosphate. It carries out the reaction isopentenyl diphosphate + (2E)-geranyl diphosphate = (2E,6E)-farnesyl diphosphate + diphosphate. It catalyses the reaction isopentenyl diphosphate + (2E,6E)-farnesyl diphosphate = (2E,6E,10E)-geranylgeranyl diphosphate + diphosphate. It participates in secondary metabolite biosynthesis; terpenoid biosynthesis. Functionally, geranylgeranyl pyrophosphate synthase; part of the gene cluster that mediates the biosynthesis of pleuromutilin, a tricyclic diterpene showing antibacterial properties. The geranylgeranyl diphosphate (GGPP) synthase ple4 catalyzes the first step in pleuromutilin biosynthesis. GGPP is then substrate of the premutilin synthase (PS) ple3 to yield premutilin. Premutilin synthase is a bifunctional enzyme composed of the fusion of a class II diterpene cyclase (DTC) and a class I diterpene synthase (DTS), with the corresponding domains and active sites containing characteristic aspartate-rich motifs. GGPP is first converted to mutildienyl-diphosphate (MPP) at the class II DTC site. MPP is subsequently further cyclized at the class I DTS site, followed by a 1,5-hydride shift and addition of water prior to terminating deprotonation, to yield premutilin. The cytochrome P450 monooxygenases ple5 and ple6 hydroxylate premutilin at C-11 and C-3, respectively, producing 11-hydroxypremutilin and 3-hydroxypremutilin. The combination of the actions of both ple5 and ple6 leads to the production of 3,11-dihydroxypremutilin. The short chain dehydrogenase ple7 further converts 3,11-dihydroxypremutilin into mutilin. The acetyltransferase ple2 then acetylates mutilin to produce 14-O-acetylmutilin. Finally, the cytochrome P450 monooxygenase ple1 catalyzes hydroxylation on the alpha position of the acetyl side chain of 14-O-acetylmutilin to yield pleuromutilin. The chain is Geranylgeranyl pyrophosphate synthase from Rhodocybe pseudopiperita (Clitopilus pseudopiperitus).